Reading from the N-terminus, the 206-residue chain is Small ribosomal subunit protein uS4 (206 aa).

Residues 96–156 (GRLDNVVYRM…EKAKKQSRVK (61 aa)) enclose the S4 RNA-binding domain.

It belongs to the universal ribosomal protein uS4 family. In terms of assembly, part of the 30S ribosomal subunit. Contacts protein S5. The interaction surface between S4 and S5 is involved in control of translational fidelity.

In terms of biological role, one of the primary rRNA binding proteins, it binds directly to 16S rRNA where it nucleates assembly of the body of the 30S subunit. Its function is as follows. With S5 and S12 plays an important role in translational accuracy. The polypeptide is Small ribosomal subunit protein uS4 (Cronobacter sakazakii (strain ATCC BAA-894) (Enterobacter sakazakii)).